The following is a 349-amino-acid chain: CCN family member 2 (349 aa).

Positions 1-26 (MSATGLSPVRCAFVLLLALCSRPASG) are cleaved as a signal peptide. The IGFBP N-terminal domain occupies 27 to 98 (QDCSGQCQCA…NRKIGVCTAK (72 aa)). Disulfide bonds link Cys29-Cys54, Cys33-Cys56, Cys35-Cys57, Cys43-Cys60, Cys68-Cys82, and Cys74-Cys95. Residues 101-167 (APCVFGGTVY…GKCCEEWVCD (67 aa)) form the VWFC domain. Positions 198 to 243 (NCLVQTTEWSACSKTCGMGISTRVTNDNAFCRLEKQSRLCMVRPCE) constitute a TSP type-1 domain. The segment at 247–349 (EENIKKGKKC…YYRKMYGDMA (103 aa)) is heparin-binding. 5 disulfides stabilise this stretch: Cys256/Cys293, Cys273/Cys307, Cys284/Cys323, Cys287/Cys325, and Cys292/Cys329. One can recognise a CTCK domain in the interval 256–330 (CIRTPKISKP…KTCACHYNCP (75 aa)).

It belongs to the CCN family. As to quaternary structure, monomer. Interacts with TSKU.

Its subcellular location is the secreted. It localises to the extracellular space. The protein resides in the extracellular matrix. Functionally, major connective tissue mitoattractant secreted by vascular endothelial cells. Promotes proliferation and differentiation of chondrocytes. Is involved in the stimulation of osteoblast differentiation and has a critical role in osteogenesis. Mediates heparin- and divalent cation-dependent cell adhesion in many cell types including fibroblasts, myofibroblasts, endothelial and epithelial cells. Enhances fibroblast growth factor-induced DNA synthesis. This Sus scrofa (Pig) protein is CCN family member 2 (CCN2).